The sequence spans 147 residues: Hemoglobin subunit beta (147 aa).

The Globin domain occupies 3 to 147 (NWTKTEKATI…VMSALGKQYH (145 aa)). The heme b site is built by His64 and His93.

This sequence belongs to the globin family. In terms of assembly, heterotetramer of two alpha chains and two beta chains. As to expression, red blood cells.

Involved in oxygen transport from gills to the various peripheral tissues. This is Hemoglobin subunit beta (hbb) from Gymnodraco acuticeps (Antarctic dragonfish).